The primary structure comprises 6907 residues: Fibrous sheath-interacting protein 2 (6907 aa).

Residues 273–292 (EERIEEQQHRNREESDRKKQ) form a disordered region. Phosphoserine is present on S430. 8 disordered regions span residues 439-472 (SQAF…ESGP), 954-990 (FQKS…RPFP), 1545-1573 (VQED…TKEM), 3202-3257 (VSSD…FDQT), 5650-5672 (RTSS…EHHS), 5725-5781 (SAQS…KPGI), 5850-5880 (DKGN…EAPS), and 6852-6874 (GSAN…KQGS). Residues 445 to 460 (PSKEEKETNADWDGRP) show a composition bias toward basic and acidic residues. The segment covering 954-966 (FQKSRQPRISSPS) has biased composition (polar residues). 2 stretches are compositionally biased toward basic and acidic residues: residues 1545 to 1555 (VQEDNKEETKS) and 3213 to 3229 (SVED…RPDS). A compositionally biased stretch (low complexity) spans 5728 to 5741 (SVTTKKVSSSTNKN). A coiled-coil region spans residues 5738-5766 (TNKNISAKEKEEEEREKEKVREEIKSEPS). A compositionally biased stretch (basic and acidic residues) spans 5743–5778 (SAKEKEEEEREKEKVREEIKSEPSKPDDPQNQRESK).

In terms of assembly, may interact with AKAP4. In terms of tissue distribution, predominantly expressed in testis.

In terms of biological role, plays a role in spermatogenesis. In Homo sapiens (Human), this protein is Fibrous sheath-interacting protein 2 (FSIP2).